The sequence spans 455 residues: Ribosome biogenesis protein NOP53 (455 aa).

Over residues 1 to 15 the composition is skewed to polar residues; that stretch reads MAPTNLTKKPSQYKQ. Residues 1–25 are disordered; sequence MAPTNLTKKPSQYKQSSRKGKKAWR. Residues 16 to 25 are compositionally biased toward basic residues; the sequence is SSRKGKKAWR. Position 31 is a phosphoserine (serine 31). The segment at 264–333 is disordered; that stretch reads HLMETLDDNE…RNKAKRHEEK (70 aa). Residues 268–294 show a composition bias toward acidic residues; that stretch reads TLDDNEEEESSSNEEEEEEEEENENEN. Positions 314-328 are enriched in basic residues; the sequence is VKNKKKTKYQRNKAK.

This sequence belongs to the NOP53 family. As to quaternary structure, interacts with CBF5, FPR3, FPR4, NOP2, PIH1, RRN3, RRP6 and PAP2. Interacts with pre-60S ribosomal particles.

It is found in the nucleus. The protein resides in the nucleolus. The protein localises to the nucleoplasm. Late-acting factor in the nuclear maturation of 60S ribosomal subunits, which is required for normal acquisition of export competence. Required for the export of the large subunit. Acts to stimulate the RNase activity of the exosome complex, and may recruit the exosome to 7S pre-rRNA for processing. Associates with numerous RNAs including the 27S and 7S pre-rRNAs and the box H/ACA snoRNA snR37. Also interacts (via N-terminal region) with the mature 25S rRNA and the mature 5.8S rRNA. The chain is Ribosome biogenesis protein NOP53 from Saccharomyces cerevisiae (strain ATCC 204508 / S288c) (Baker's yeast).